Consider the following 459-residue polypeptide: GTPase Der (459 aa).

2 consecutive EngA-type G domains span residues 3–167 (FTFA…PEPE) and 188–363 (IRVA…AVWN). GTP-binding positions include 9–16 (GRPNVGKS), 56–60 (DTAGL), 119–122 (NKSE), 194–201 (GRPNAGKS), 241–245 (DTAGL), and 306–309 (NKWD). Residues 364-448 (TRVSTAALNR…PVRITLREKA (85 aa)) form the KH-like domain.

Belongs to the TRAFAC class TrmE-Era-EngA-EngB-Septin-like GTPase superfamily. EngA (Der) GTPase family. In terms of assembly, associates with the 50S ribosomal subunit.

Its function is as follows. GTPase that plays an essential role in the late steps of ribosome biogenesis. The chain is GTPase Der from Rhodopseudomonas palustris (strain HaA2).